Here is a 149-residue protein sequence, read N- to C-terminus: Protein SprT-like (149 aa).

The SprT-like domain maps to 4–143 (TDYVKQVSLE…CGLCRGKLLL (140 aa)). His64 is a binding site for Zn(2+). Glu65 is a catalytic residue. Position 68 (His68) interacts with Zn(2+).

Belongs to the SprT family. Zn(2+) is required as a cofactor.

It localises to the cytoplasm. This is Protein SprT-like from Streptococcus pneumoniae (strain JJA).